The following is a 159-amino-acid chain: 17 kDa surface antigen (159 aa).

A signal peptide spans M1–A19. Residue C20 is the site of N-palmitoyl cysteine attachment. C20 carries S-diacylglycerol cysteine lipidation.

The protein belongs to the rickettsiale 17 kDa surface antigen family.

The protein resides in the cell outer membrane. This chain is 17 kDa surface antigen (omp), found in Rickettsia bellii.